A 328-amino-acid polypeptide reads, in one-letter code: Arabinose 5-phosphate isomerase KdsD (328 aa).

An SIS domain is found at 41–184; sequence ACEAIFRCHG…AVALLKARGF (144 aa). Substrate-binding positions include 75 to 76, His82, His88, 114 to 123, and 148 to 150; these read GT, TLIPVLKRQK, and NVP. Residue His82 participates in Zn(2+) binding. Residues 210 to 268 form the CBS 1 domain; sequence MHTGTEIPTVSPDASLRDALLEITRKSLGLTVICDDSMRIKGIFTDGDLRRVFDMGIDL. Asp275 contributes to the substrate binding site. The CBS 2 domain maps to 277–328; the sequence is MTRGGIRVPPNILAVDALNLMESRHITALLVADGDQLLGVVHMHDMLRAGVV.

It belongs to the SIS family. GutQ/KpsF subfamily. As to quaternary structure, homotetramer.

It catalyses the reaction D-arabinose 5-phosphate = D-ribulose 5-phosphate. It functions in the pathway carbohydrate biosynthesis; 3-deoxy-D-manno-octulosonate biosynthesis; 3-deoxy-D-manno-octulosonate from D-ribulose 5-phosphate: step 1/3. It participates in bacterial outer membrane biogenesis; lipopolysaccharide biosynthesis. In terms of biological role, involved in the biosynthesis of 3-deoxy-D-manno-octulosonate (KDO), a unique 8-carbon sugar component of lipopolysaccharides (LPSs). Catalyzes the reversible aldol-ketol isomerization between D-ribulose 5-phosphate (Ru5P) and D-arabinose 5-phosphate (A5P). This Yersinia pestis protein is Arabinose 5-phosphate isomerase KdsD (kdsD).